The following is a 205-amino-acid chain: Holliday junction branch migration complex subunit RuvA (205 aa).

Residues 1–64 (MIGRLNGILV…EDAQLLFGFN (64 aa)) form a domain I region. Residues 65–143 (NKVERALFRE…NWGNDLFTPF (79 aa)) are domain II. Positions 144–156 (SDSAVIEPFSDAT) are flexible linker. Residues 157–205 (IANNAADDAVSALVSLGYKLPQAQKAVKSVSKPDMSTEVLIKESLKSML) are domain III.

This sequence belongs to the RuvA family. As to quaternary structure, homotetramer. Forms an RuvA(8)-RuvB(12)-Holliday junction (HJ) complex. HJ DNA is sandwiched between 2 RuvA tetramers; dsDNA enters through RuvA and exits via RuvB. An RuvB hexamer assembles on each DNA strand where it exits the tetramer. Each RuvB hexamer is contacted by two RuvA subunits (via domain III) on 2 adjacent RuvB subunits; this complex drives branch migration. In the full resolvosome a probable DNA-RuvA(4)-RuvB(12)-RuvC(2) complex forms which resolves the HJ.

The protein localises to the cytoplasm. Its function is as follows. The RuvA-RuvB-RuvC complex processes Holliday junction (HJ) DNA during genetic recombination and DNA repair, while the RuvA-RuvB complex plays an important role in the rescue of blocked DNA replication forks via replication fork reversal (RFR). RuvA specifically binds to HJ cruciform DNA, conferring on it an open structure. The RuvB hexamer acts as an ATP-dependent pump, pulling dsDNA into and through the RuvAB complex. HJ branch migration allows RuvC to scan DNA until it finds its consensus sequence, where it cleaves and resolves the cruciform DNA. The polypeptide is Holliday junction branch migration complex subunit RuvA (Pseudoalteromonas translucida (strain TAC 125)).